The primary structure comprises 136 residues: Outer envelope pore protein 16-4, chloroplastic (136 aa).

Positions 1-59 are contains 4 beta strands; it reads MEEELLSAVPCSSLTVESVLRVATAGGLYGLCAGPRDARKIGLSGVSQASFVAKSIGRF. 4 consecutive transmembrane segments (helical) span residues 18 to 34, 56 to 72, 86 to 102, and 110 to 126; these read SVLRVATAGGLYGLCAG, IGRFGFQCGLVSGVFTM, WVNALVGGAVAGAAVAI, and VVGMAGLVSAFSVLANC.

It belongs to the Tim17/Tim22/Tim23 family. Plastid outer envelope porin OEP16 (TC 1.B.30) subfamily. Homodimer and oligomers in membrane.

It is found in the plastid. Its subcellular location is the chloroplast outer membrane. Voltage-dependent high-conductance channel with a slight cation-selectivity; selective for amino acids but excludes triosephosphates or uncharged sugars. Non-essential amino acid-selective channel protein and translocation pore for NADPH:protochlorophyllide oxidoreductase A (PORA) and possibly PORB. This is Outer envelope pore protein 16-4, chloroplastic (OEP164) from Arabidopsis thaliana (Mouse-ear cress).